We begin with the raw amino-acid sequence, 143 residues long: Transcriptional regulator MraZ (143 aa).

SpoVT-AbrB domains are found at residues 5-47 (EYQH…PLNE) and 76-119 (ATEC…SDER).

Belongs to the MraZ family. Forms oligomers.

Its subcellular location is the cytoplasm. The protein localises to the nucleoid. The sequence is that of Transcriptional regulator MraZ from Enterococcus faecalis (strain ATCC 700802 / V583).